Here is a 299-residue protein sequence, read N- to C-terminus: Aspartate carbamoyltransferase catalytic subunit (299 aa).

Residues R54 and T55 each contribute to the carbamoyl phosphate site. K83 contributes to the L-aspartate binding site. Positions 104, 132, and 135 each coordinate carbamoyl phosphate. 2 residues coordinate L-aspartate: R165 and R222. 2 residues coordinate carbamoyl phosphate: L261 and P262.

The protein belongs to the aspartate/ornithine carbamoyltransferase superfamily. ATCase family. In terms of assembly, heterooligomer of catalytic and regulatory chains.

The catalysed reaction is carbamoyl phosphate + L-aspartate = N-carbamoyl-L-aspartate + phosphate + H(+). The protein operates within pyrimidine metabolism; UMP biosynthesis via de novo pathway; (S)-dihydroorotate from bicarbonate: step 2/3. In terms of biological role, catalyzes the condensation of carbamoyl phosphate and aspartate to form carbamoyl aspartate and inorganic phosphate, the committed step in the de novo pyrimidine nucleotide biosynthesis pathway. The chain is Aspartate carbamoyltransferase catalytic subunit from Archaeoglobus fulgidus (strain ATCC 49558 / DSM 4304 / JCM 9628 / NBRC 100126 / VC-16).